The primary structure comprises 376 residues: Chorismate synthase (376 aa).

Positions 39 and 45 each coordinate NADP(+). FMN is bound by residues 115 to 117, glycine 276, 291 to 295, and arginine 317; these read RSS and KPIPT.

The protein belongs to the chorismate synthase family. Homotetramer. FMNH2 serves as cofactor.

It catalyses the reaction 5-O-(1-carboxyvinyl)-3-phosphoshikimate = chorismate + phosphate. It functions in the pathway metabolic intermediate biosynthesis; chorismate biosynthesis; chorismate from D-erythrose 4-phosphate and phosphoenolpyruvate: step 7/7. In terms of biological role, catalyzes the anti-1,4-elimination of the C-3 phosphate and the C-6 proR hydrogen from 5-enolpyruvylshikimate-3-phosphate (EPSP) to yield chorismate, which is the branch point compound that serves as the starting substrate for the three terminal pathways of aromatic amino acid biosynthesis. This reaction introduces a second double bond into the aromatic ring system. This Thermotoga maritima (strain ATCC 43589 / DSM 3109 / JCM 10099 / NBRC 100826 / MSB8) protein is Chorismate synthase.